Reading from the N-terminus, the 152-residue chain is Xanthine-guanine phosphoribosyltransferase (152 aa).

5-phospho-alpha-D-ribose 1-diphosphate contacts are provided by residues 37–38 (RG), Arg69, and 88–96 (DDLVDTGGT). Arg69 contributes to the GMP binding site. Asp89 serves as a coordination point for Mg(2+). 2 residues coordinate guanine: Asp92 and Ile135. Xanthine is bound by residues Asp92 and Ile135. GMP contacts are provided by residues 92–96 (DTGGT) and 134–135 (WI).

Belongs to the purine/pyrimidine phosphoribosyltransferase family. XGPT subfamily. As to quaternary structure, homotetramer. It depends on Mg(2+) as a cofactor.

It localises to the cell inner membrane. It carries out the reaction GMP + diphosphate = guanine + 5-phospho-alpha-D-ribose 1-diphosphate. It catalyses the reaction XMP + diphosphate = xanthine + 5-phospho-alpha-D-ribose 1-diphosphate. The catalysed reaction is IMP + diphosphate = hypoxanthine + 5-phospho-alpha-D-ribose 1-diphosphate. The protein operates within purine metabolism; GMP biosynthesis via salvage pathway; GMP from guanine: step 1/1. It participates in purine metabolism; XMP biosynthesis via salvage pathway; XMP from xanthine: step 1/1. Functionally, purine salvage pathway enzyme that catalyzes the transfer of the ribosyl-5-phosphate group from 5-phospho-alpha-D-ribose 1-diphosphate (PRPP) to the N9 position of the 6-oxopurines guanine and xanthine to form the corresponding ribonucleotides GMP (guanosine 5'-monophosphate) and XMP (xanthosine 5'-monophosphate), with the release of PPi. To a lesser extent, also acts on hypoxanthine. The polypeptide is Xanthine-guanine phosphoribosyltransferase (Escherichia coli O7:K1 (strain IAI39 / ExPEC)).